A 276-amino-acid polypeptide reads, in one-letter code: SF-assemblin (276 aa).

A nonhelical region region spans residues 1–31 (MSLRPFETPGGLSSLSPRRRDFSPTRPGTNG). Residues 1-37 (MSLRPFETPGGLSSLSPRRRDFSPTRPGTNGPSAKLE) form a disordered region. The segment at 32–276 (PSAKLEHVTE…LQEGLKLVSA (245 aa)) is rod. Residues 67–145 (LLQESLQRIE…LVRDERESRR (79 aa)) adopt a coiled-coil conformation.

It belongs to the SF-assemblin family.

The protein resides in the cytoplasm. The protein localises to the cytoskeleton. Its function is as follows. Major component of the striated microtubule-associated fibers (SMAFs; system-I-fibers). The chain is SF-assemblin from Chlamydomonas reinhardtii (Chlamydomonas smithii).